A 443-amino-acid polypeptide reads, in one-letter code: Thymidine phosphorylase (443 aa).

Belongs to the thymidine/pyrimidine-nucleoside phosphorylase family. Homodimer.

It catalyses the reaction thymidine + phosphate = 2-deoxy-alpha-D-ribose 1-phosphate + thymine. Its pathway is pyrimidine metabolism; dTMP biosynthesis via salvage pathway; dTMP from thymine: step 1/2. The enzymes which catalyze the reversible phosphorolysis of pyrimidine nucleosides are involved in the degradation of these compounds and in their utilization as carbon and energy sources, or in the rescue of pyrimidine bases for nucleotide synthesis. The polypeptide is Thymidine phosphorylase (Shewanella woodyi (strain ATCC 51908 / MS32)).